Reading from the N-terminus, the 559-residue chain is MFPLIILISFSLASLSETATGAVTNLSACLINHNVHNFSIYPTSRNYFNLLHFSLQNLRFAAPFMPKPTFIILPSSKEELVSTIFCCRKASYEIRVRCGGHSYEGTSYVSFDASPFVIVDLMKLDDVSVDLDSETAWAQGGATIGQIYYAIAKVSDVHAFSAGSGPTVGSGGHISGGGFGLLSRKFGLAADNVVDALLIDADGRLLDRKAMGEDVFWAIRGGGGGNWGIVYAWKIRLLKVPKIVTTCMIYRPGSKQYVAQILEKWQIVTPNLVDDFTLGVLLRPADLPADMKYGNTTPIEIFPQFNALYLGPKTEVLSISNETFPELGVKNDECKEMTWVESALFFSELADVNGNSTGDISRLKERYMDGKGFFKGKTDYVKKPVSMDGMLTFLVELEKNPKGYLVFDPYGGAMDKISDQAIAFPHRKGNLFAIQYLAQWNEEDDYMSDVYMEWIRGFYNTMTPFVSSSPRGAYINYLDMDLGVNMVDDYLLRNASSSSPSSSVDAVERARAWGEMYFLHNYDRLVKAKTQIDPLNVFRHEQSIPPMLGSTQEHKYSSE.

The signal sequence occupies residues 1 to 21; it reads MFPLIILISFSLASLSETATG. Asn25 and Asn37 each carry an N-linked (GlcNAc...) asparagine glycan. Cys29 and Cys86 form a disulfide bridge. The 177-residue stretch at 64–240 folds into the FAD-binding PCMH-type domain; sequence FMPKPTFIIL…YAWKIRLLKV (177 aa). A Pros-8alpha-FAD histidine modification is found at His101. Residues Asn321, Asn355, and Asn494 are each glycosylated (N-linked (GlcNAc...) asparagine).

Belongs to the oxygen-dependent FAD-linked oxidoreductase family. It depends on FAD as a cofactor. In terms of tissue distribution, mostly expressed in roots.

The protein resides in the vacuole. It functions in the pathway alkaloid biosynthesis; nicotine biosynthesis. Its function is as follows. Involved in the biosynthesis of pyridine alkaloid natural products, leading mainly to the production of anabasine, anatabine, nicotine and nornicotine, effective deterrents against herbivores with antiparasitic and pesticide properties (neurotoxins); nornicotine serves as the precursor in the synthesis of the carcinogen compound N'-nitrosonornicotine (NNN). Catalyzes a late oxidation step subsequent to the pyridine ring condensation reaction in the biosynthesis of alkaloids. The polypeptide is Berberine bridge enzyme-like A (Nicotiana tabacum (Common tobacco)).